The chain runs to 540 residues: FAD-binding monooxygenase lolF1 (540 aa).

FAD contacts are provided by residues 43 to 46 and 55 to 58; these read VWRE and DSLF. Residues 53-55, 182-188, and 205-206 each bind NADP(+); these read AVD, TGPSGVQ, and QS.

The protein belongs to the FAD-binding monooxygenase family. It depends on FAD as a cofactor.

It participates in alkaloid biosynthesis. Its function is as follows. FAD-binding monooxygenase; part of the gene cluster that mediates the biosynthesis of loline alkaloids, potent insecticidal agents composed of a pyrrolizidine ring system and an uncommon ether bridge linking carbons 2 and 7. Lolines are structurally differentiated by the various modifications of the L-amino group and include norloline, loline, N-methylloline, N-acetylloline, N-acetylnorloline, and N-formylloline. The first committed step is the condensation of O-acetyl-L-homoserine (derived from L-aspartic acid) and L-proline, probably catalyzed by the gamma-type pyridoxal 5'-phosphate(PLP)-dependent enzyme lolC, to give the diamino diacid, NACPP. Ensuing cyclization, decarboxylation, and acetylation steps yield 1-exo-acetamidopyrrolizidine (AcAP). LolO is required for installation of the ether bridge upon the pathway intermediate, 1-exo-acetamidopyrrolizidine (AcAP). In sequential 2-oxoglutarate- and O(2)-consuming steps, lolO removes hydrogens from C2 and C7 of AcAP to form both carbon-oxygen bonds in N-acetylnorloline (NANL), the precursor to all other lolines. The enzymes lolD, lolE, lolF and lolT have also been proposed to be involved in the ether-bridge installation. Further processing of the exocyclic moiety of NANL by fungal N-acetamidase (LolN), methyltransferase (LolM), and cytochrome P450 (LolP) enzymes, with occasional involvement of a plant acetyltransferase, generates the other known lolines. LolN transforms NANL to norlonine which is monomethylated and dimethylated to respectively lonine and N-methyllonine (NML) by lolM. LolP catalyzes hydroxylation of the methyl group in N-methylloline (NML) and further oxygenation to N-formylloline (NFL). A plant acetyltransferase is responsible for the acetylation of loline to form N-acetylloline (NAL). LolA might interact with aspartate kinase to prevent feedback inhibition of its activity by these end products and thereby promote production of L-homoserine from L-aspartate. This Epichloe uncinata (Endophyte fungus) protein is FAD-binding monooxygenase lolF1.